Here is a 424-residue protein sequence, read N- to C-terminus: GTPase Obg (424 aa).

The region spanning 1–158 (MFIDTAKIFV…RWIKLELKLL (158 aa)) is the Obg domain. Positions 159 to 331 (ADVGLIGFPN…LMKEAARLLS (173 aa)) constitute an OBG-type G domain. GTP contacts are provided by residues 165–172 (GFPNVGKS), 190–194 (FTTLK), 212–215 (DIPG), 282–285 (NKSD), and 312–314 (SAA). Residues serine 172 and threonine 192 each coordinate Mg(2+). The region spanning 345–424 (RFIEEEKRFT…LNDFEFDFLL (80 aa)) is the OCT domain.

The protein belongs to the TRAFAC class OBG-HflX-like GTPase superfamily. OBG GTPase family. Monomer. The cofactor is Mg(2+).

It localises to the cytoplasm. Functionally, an essential GTPase which binds GTP, GDP and possibly (p)ppGpp with moderate affinity, with high nucleotide exchange rates and a fairly low GTP hydrolysis rate. Plays a role in control of the cell cycle, stress response, ribosome biogenesis and in those bacteria that undergo differentiation, in morphogenesis control. In Clostridium botulinum (strain Okra / Type B1), this protein is GTPase Obg.